A 205-amino-acid chain; its full sequence is Holliday junction branch migration complex subunit RuvA (205 aa).

The segment at methionine 1–lysine 62 is domain I. Residues threonine 63–leucine 141 are domain II. Residues phenylalanine 142–lysine 152 are flexible linker. The domain III stretch occupies residues glycine 153 to arginine 205.

Belongs to the RuvA family. Homotetramer. Forms an RuvA(8)-RuvB(12)-Holliday junction (HJ) complex. HJ DNA is sandwiched between 2 RuvA tetramers; dsDNA enters through RuvA and exits via RuvB. An RuvB hexamer assembles on each DNA strand where it exits the tetramer. Each RuvB hexamer is contacted by two RuvA subunits (via domain III) on 2 adjacent RuvB subunits; this complex drives branch migration. In the full resolvosome a probable DNA-RuvA(4)-RuvB(12)-RuvC(2) complex forms which resolves the HJ.

The protein localises to the cytoplasm. Functionally, the RuvA-RuvB-RuvC complex processes Holliday junction (HJ) DNA during genetic recombination and DNA repair, while the RuvA-RuvB complex plays an important role in the rescue of blocked DNA replication forks via replication fork reversal (RFR). RuvA specifically binds to HJ cruciform DNA, conferring on it an open structure. The RuvB hexamer acts as an ATP-dependent pump, pulling dsDNA into and through the RuvAB complex. HJ branch migration allows RuvC to scan DNA until it finds its consensus sequence, where it cleaves and resolves the cruciform DNA. This chain is Holliday junction branch migration complex subunit RuvA, found in Bacillus cytotoxicus (strain DSM 22905 / CIP 110041 / 391-98 / NVH 391-98).